The chain runs to 226 residues: UPF0173 metal-dependent hydrolase TM_1162 (226 aa).

It belongs to the UPF0173 family.

The sequence is that of UPF0173 metal-dependent hydrolase TM_1162 from Thermotoga maritima (strain ATCC 43589 / DSM 3109 / JCM 10099 / NBRC 100826 / MSB8).